Reading from the N-terminus, the 103-residue chain is Acyl carrier protein (103 aa).

The Carrier domain occupies 14 to 89; that stretch reads NIVSNIVQDI…EFIDFTLQTI (76 aa). At serine 49 the chain carries O-(pantetheine 4'-phosphoryl)serine.

Belongs to the acyl carrier protein (ACP) family. In terms of processing, 4'-phosphopantetheine is transferred from CoA to a specific serine of apo-ACP by AcpS. This modification is essential for activity because fatty acids are bound in thioester linkage to the sulfhydryl of the prosthetic group.

It localises to the plastid. The protein localises to the cyanelle. The protein operates within lipid metabolism; fatty acid biosynthesis. Carrier of the growing fatty acid chain in fatty acid biosynthesis. This chain is Acyl carrier protein, found in Cyanophora paradoxa.